The sequence spans 1119 residues: Protein translocase subunit SecA (1119 aa).

ATP is bound by residues glutamine 177, 195–199 (GEGKT), and aspartate 692. Residues 1025–1081 (APSIHEARQTKSKEKVETRKEEIPNMDERAAQSRAAGNTQRQQPEVTETIVRDRPKI) are disordered. The segment covering 1029–1055 (HEARQTKSKEKVETRKEEIPNMDERAA) has biased composition (basic and acidic residues). A compositionally biased stretch (polar residues) spans 1059 to 1070 (AAGNTQRQQPEV).

Belongs to the SecA family. Monomer and homodimer. Part of the essential Sec protein translocation apparatus which comprises SecA, SecYEG and auxiliary proteins SecDF. Other proteins may also be involved.

The protein resides in the cell inner membrane. It localises to the cytoplasm. It carries out the reaction ATP + H2O + cellular proteinSide 1 = ADP + phosphate + cellular proteinSide 2.. Its function is as follows. Part of the Sec protein translocase complex. Interacts with the SecYEG preprotein conducting channel. Has a central role in coupling the hydrolysis of ATP to the transfer of proteins into and across the cell membrane, serving as an ATP-driven molecular motor driving the stepwise translocation of polypeptide chains across the membrane. In Christiangramia forsetii (strain DSM 17595 / CGMCC 1.15422 / KT0803) (Gramella forsetii), this protein is Protein translocase subunit SecA.